Reading from the N-terminus, the 476-residue chain is Serine--tRNA ligase (476 aa).

279-281 (TAE) provides a ligand contact to L-serine. 310–312 (RAE) is an ATP binding site. Glu333 serves as a coordination point for L-serine. 400-403 (EISS) serves as a coordination point for ATP. Position 435 (Ser435) interacts with L-serine.

This sequence belongs to the class-II aminoacyl-tRNA synthetase family. Type-1 seryl-tRNA synthetase subfamily. As to quaternary structure, homodimer. The tRNA molecule binds across the dimer.

The protein localises to the cytoplasm. The enzyme catalyses tRNA(Ser) + L-serine + ATP = L-seryl-tRNA(Ser) + AMP + diphosphate + H(+). It catalyses the reaction tRNA(Sec) + L-serine + ATP = L-seryl-tRNA(Sec) + AMP + diphosphate + H(+). It participates in aminoacyl-tRNA biosynthesis; selenocysteinyl-tRNA(Sec) biosynthesis; L-seryl-tRNA(Sec) from L-serine and tRNA(Sec): step 1/1. Its function is as follows. Catalyzes the attachment of serine to tRNA(Ser). Is also able to aminoacylate tRNA(Sec) with serine, to form the misacylated tRNA L-seryl-tRNA(Sec), which will be further converted into selenocysteinyl-tRNA(Sec). This chain is Serine--tRNA ligase, found in Rhodopseudomonas palustris (strain BisA53).